Consider the following 323-residue polypeptide: Secreted frizzled-related protein 3 (323 aa).

The N-terminal stretch at 1–32 is a signal peptide; it reads MVCCGPGRMLLGWAGLLVLAALCLLQVPGAQA. In terms of domain architecture, FZ spans 33–150; sequence AACEPVRIPL…VYDRGVCISP (118 aa). Disulfide bonds link cysteine 35/cysteine 96, cysteine 43/cysteine 89, cysteine 80/cysteine 119, cysteine 108/cysteine 147, and cysteine 112/cysteine 136. Asparagine 49 carries N-linked (GlcNAc...) asparagine glycosylation. In terms of domain architecture, NTR spans 178–298; that stretch reads CKCKPVRATQ…WDMKLRHLGL (121 aa). The tract at residues 299-323 is disordered; sequence GKTDASDSTQNQKSGRNSNPRPARS. A compositionally biased stretch (polar residues) spans 304 to 323; that stretch reads SDSTQNQKSGRNSNPRPARS.

The protein belongs to the secreted frizzled-related protein (sFRP) family. As to quaternary structure, interacts with MYOC. In terms of tissue distribution, expressed in kidney, brain, testis. Weak expression in spleen and heart.

It is found in the secreted. In terms of biological role, soluble frizzled-related proteins (sFRPS) function as modulators of Wnt signaling through direct interaction with Wnts. They have a role in regulating cell growth and differentiation in specific cell types. SFRP3/FRZB appears to be involved in limb skeletogenesis. Antagonist of Wnt8 signaling. Regulates chondrocyte maturation and long bone development. The chain is Secreted frizzled-related protein 3 (Frzb) from Mus musculus (Mouse).